Reading from the N-terminus, the 390-residue chain is Heparan sulfate glucosamine 3-O-sulfotransferase 3B1 (390 aa).

The tract at residues 1-25 is disordered; that stretch reads MGQRLSGGRSCLDVPGRLLPQPPPP. Residues 1–32 lie on the Cytoplasmic side of the membrane; it reads MGQRLSGGRSCLDVPGRLLPQPPPPPPPVRRK. The helical; Signal-anchor for type II membrane protein transmembrane segment at 33–53 threads the bilayer; the sequence is LALLFAMLCVWLYMFLYSCAG. The Lumenal portion of the chain corresponds to 54-390; the sequence is SCAAAPGLLL…QMTGHDFGWD (337 aa). The interval 74–133 is disordered; the sequence is PPALATAPDGTPPRLPFRAPPATPLASGKEMAEGAASPEEQSPEVPDSPSPISSFFSGSG. The segment covering 83–96 has biased composition (pro residues); the sequence is GTPPRLPFRAPPAT. Positions 123 to 133 are enriched in low complexity; the sequence is SPISSFFSGSG. A 3'-phosphoadenylyl sulfate-binding site is contributed by 147–151; that stretch reads KGGTR. Residues 169–175 and 200–203 each bind substrate; these read EPHFFDR and KTPS. Residues R228 and S236 each coordinate 3'-phosphoadenylyl sulfate. An N-linked (GlcNAc...) asparagine glycan is attached at N258. A substrate-binding site is contributed by 268 to 269; sequence WS. An N-linked (GlcNAc...) asparagine glycan is attached at N329. C336 and C348 are oxidised to a cystine. 353–357 is a binding site for 3'-phosphoadenylyl sulfate; the sequence is KGRTH.

It belongs to the sulfotransferase 1 family. As to expression, ubiquitous. Most abundant in liver and placenta, followed by heart and kidney.

Its subcellular location is the golgi apparatus membrane. It catalyses the reaction alpha-D-glucosaminyl-[heparan sulfate](n) + 3'-phosphoadenylyl sulfate = 3-sulfo-alpha-D-glucosaminyl-[heparan sulfate](n) + adenosine 3',5'-bisphosphate + H(+). Its function is as follows. Sulfotransferase that utilizes 3'-phospho-5'-adenylyl sulfate (PAPS) to catalyze the transfer of a sulfo group to an N-unsubstituted glucosamine linked to a 2-O-sulfo iduronic acid unit on heparan sulfate. Catalyzes the O-sulfation of glucosamine in IdoUA2S-GlcNS and also in IdoUA2S-GlcNH2. The substrate-specific O-sulfation generates an enzyme-modified heparan sulfate which acts as a binding receptor to Herpes simplex virus-1 (HSV-1) and permits its entry. Unlike HS3ST1/3-OST-1, does not convert non-anticoagulant heparan sulfate to anticoagulant heparan sulfate. In Homo sapiens (Human), this protein is Heparan sulfate glucosamine 3-O-sulfotransferase 3B1 (HS3ST3B1).